The primary structure comprises 522 residues: Peptide chain release factor 3 (522 aa).

One can recognise a tr-type G domain in the interval 10–277 (ASRKTFAIIS…TFVDFAPSPS (268 aa)). Residues 19-26 (SHPDAGKT), 87-91 (DTPGH), and 141-144 (NKMD) contribute to the GTP site.

The protein belongs to the TRAFAC class translation factor GTPase superfamily. Classic translation factor GTPase family. PrfC subfamily.

It is found in the cytoplasm. Functionally, increases the formation of ribosomal termination complexes and stimulates activities of RF-1 and RF-2. It binds guanine nucleotides and has strong preference for UGA stop codons. It may interact directly with the ribosome. The stimulation of RF-1 and RF-2 is significantly reduced by GTP and GDP, but not by GMP. The sequence is that of Peptide chain release factor 3 from Listeria monocytogenes serotype 4b (strain CLIP80459).